The primary structure comprises 296 residues: D-alanine--D-alanine ligase (296 aa).

The 194-residue stretch at 99–292 (TYRVLDGYVN…FEELVDAIIQ (194 aa)) folds into the ATP-grasp domain. ATP is bound at residue 125–176 (GFPCVIKPRKEGSSIGVHICDNSNQLYNDLSEELKKYNEMMIQRYIEGRELT). Mg(2+)-binding residues include aspartate 247, glutamate 259, and asparagine 261.

It belongs to the D-alanine--D-alanine ligase family. Mg(2+) is required as a cofactor. Requires Mn(2+) as cofactor.

The protein resides in the cytoplasm. The catalysed reaction is 2 D-alanine + ATP = D-alanyl-D-alanine + ADP + phosphate + H(+). It functions in the pathway cell wall biogenesis; peptidoglycan biosynthesis. Functionally, cell wall formation. The protein is D-alanine--D-alanine ligase of Pseudothermotoga lettingae (strain ATCC BAA-301 / DSM 14385 / NBRC 107922 / TMO) (Thermotoga lettingae).